A 184-amino-acid chain; its full sequence is MDQSELVEAVSEAGGAAVAPVDLRKELEEFLKRLNIETTCIEHPEVFTVEEMMPHVSHLSGVVTKNLFLKDKKRRVFLVCVRHDRPLALGELSRRLGAPNLRLAEERLLLEKLRVRQGCVTPLALFLDTERSVTAVLDRELTHGGHTHIHCHPMTNSATMGITPADLLRFLEETQHTPVILSFD.

This sequence belongs to the PRORSD1 family.

This chain is Prolyl-tRNA synthetase associated domain-containing protein 1 (Prorsd1), found in Danio rerio (Zebrafish).